Reading from the N-terminus, the 512-residue chain is Ribonuclease Y (512 aa).

A helical transmembrane segment spans residues 2-22 (VGMYIIIPIVTFIIGGLLAWL). Residues 202–262 (SITVFHIESD…VRREIARLAL (61 aa)) enclose the KH domain. The region spanning 328-421 (LLQHARETAN…VQVCDAISGA (94 aa)) is the HD domain.

It belongs to the RNase Y family.

It localises to the cell membrane. Functionally, endoribonuclease that initiates mRNA decay. The chain is Ribonuclease Y from Parabacteroides distasonis (strain ATCC 8503 / DSM 20701 / CIP 104284 / JCM 5825 / NCTC 11152).